A 365-amino-acid chain; its full sequence is Alanine racemase (365 aa).

Lysine 32 (proton acceptor; specific for D-alanine) is an active-site residue. Lysine 32 is modified (N6-(pyridoxal phosphate)lysine). Arginine 128 contributes to the substrate binding site. The Proton acceptor; specific for L-alanine role is filled by tyrosine 257. Position 305 (methionine 305) interacts with substrate.

The protein belongs to the alanine racemase family. Pyridoxal 5'-phosphate is required as a cofactor.

It carries out the reaction L-alanine = D-alanine. Its pathway is amino-acid biosynthesis; D-alanine biosynthesis; D-alanine from L-alanine: step 1/1. Catalyzes the interconversion of L-alanine and D-alanine. May also act on other amino acids. This is Alanine racemase (alr) from Francisella tularensis subsp. holarctica (strain FTNF002-00 / FTA).